Reading from the N-terminus, the 427-residue chain is Serine protease inhibitor 88Ea (427 aa).

An N-terminal signal peptide occupies residues 1-18 (MHILSISLMAVLPAIALA). N-linked (GlcNAc...) asparagine glycosylation occurs at Asn224.

It belongs to the serpin family. As to expression, expressed in nurse cells and oocytes. Expressed in wings.

The protein resides in the secreted. Its function is as follows. Serine protease inhibitor with activity toward trypsin. Negatively regulates the Toll signaling pathway and suppresses the expression of the antifungal peptide drosomycin. Its negative regulation of the Toll signaling pathway also results in the inhibition of the melanization immune response via the phenoloxidase (PPO1) cascade. Essential for unfolding and expansion of the wings after emergence from the pupal case. May regulate the Toll pathway by blocking the proteolysis of the Toll ligand spz. The chain is Serine protease inhibitor 88Ea from Drosophila melanogaster (Fruit fly).